An 868-amino-acid polypeptide reads, in one-letter code: Leucine-rich repeat receptor-like serine/threonine-protein kinase At2g14510 (868 aa).

A signal peptide spans 1–23 (METRNKFMLLACATFSIMSLVKS). Over 24 to 510 (QNQQGFISLD…KHQPKSWLVA (487 aa)) the chain is Extracellular. 8 N-linked (GlcNAc...) asparagine glycosylation sites follow: asparagine 48, asparagine 68, asparagine 231, asparagine 235, asparagine 258, asparagine 291, asparagine 433, and asparagine 446. LRR repeat units follow at residues 412–435 (RIISLDLSLSGLTGVISPSIQNLT), 436–458 (MLRELDLSNNNLTGEVPEFLATI), and 460–482 (PLLVIHLRGNNLRGSVPQALQDR). Asparagine 495 carries N-linked (GlcNAc...) asparagine glycosylation. The helical transmembrane segment at 511-531 (IVASISCVAVTIIVLVLIFIF) threads the bilayer. Over 532–868 (RRRKSSTRKV…TFISDIPSAR (337 aa)) the chain is Cytoplasmic. In terms of domain architecture, Protein kinase spans 563-832 (NNFEVVLGKG…NMTRVAHELN (270 aa)). ATP contacts are provided by residues 569-577 (LGKGGFGVV) and lysine 590. Position 635 is a phosphotyrosine (tyrosine 635). Aspartate 687 (proton acceptor) is an active-site residue. Phosphoserine is present on serine 721. Threonine 722 and threonine 727 each carry phosphothreonine. At tyrosine 735 the chain carries Phosphotyrosine.

It belongs to the protein kinase superfamily. Ser/Thr protein kinase family.

It localises to the cell membrane. The enzyme catalyses L-seryl-[protein] + ATP = O-phospho-L-seryl-[protein] + ADP + H(+). The catalysed reaction is L-threonyl-[protein] + ATP = O-phospho-L-threonyl-[protein] + ADP + H(+). The polypeptide is Leucine-rich repeat receptor-like serine/threonine-protein kinase At2g14510 (Arabidopsis thaliana (Mouse-ear cress)).